A 194-amino-acid polypeptide reads, in one-letter code: Putative manganese efflux pump MntP (194 aa).

6 consecutive transmembrane segments (helical) span residues 2–22 (ISII…AFAV), 43–63 (LWFG…ASTF), 67–87 (VTQF…GNMV), 111–131 (PLAV…AFMF), 137–157 (AFAI…GLHI), and 174–194 (GVVL…VIAF).

This sequence belongs to the MntP (TC 9.B.29) family.

Its subcellular location is the cell membrane. Functionally, probably functions as a manganese efflux pump. The chain is Putative manganese efflux pump MntP from Bifidobacterium longum (strain DJO10A).